Here is a 236-residue protein sequence, read N- to C-terminus: MSYNLTDPYEIARYIKEAKKSTPIKAYIEGDLSNCDFTNIEKFNSGDLYILFGESEEILVIIENNKDKIKNCRIEQDRRKSAIPLLDMLKVNARIEPGAIIRDKVLIGENAVIMMGAVINIGAEIGEGTMVDMNAVVGARGKLGKNVHLGAGAVVAGVLEPPSSDPCTIEDNVLIGANAVILEGVKIGKGSVVAAGSIVTTDVPENVVVAGAPAKIIKEVDVKTKDKTKLLDDLRK.

It belongs to the transferase hexapeptide repeat family. DapH subfamily.

It catalyses the reaction (S)-2,3,4,5-tetrahydrodipicolinate + acetyl-CoA + H2O = L-2-acetamido-6-oxoheptanedioate + CoA. Its pathway is amino-acid biosynthesis; L-lysine biosynthesis via DAP pathway; LL-2,6-diaminopimelate from (S)-tetrahydrodipicolinate (acetylase route): step 1/3. Functionally, catalyzes the transfer of an acetyl group from acetyl-CoA to tetrahydrodipicolinate. The chain is 2,3,4,5-tetrahydropyridine-2,6-dicarboxylate N-acetyltransferase from Clostridium botulinum (strain Okra / Type B1).